Reading from the N-terminus, the 159-residue chain is Ribosomal RNA large subunit methyltransferase H (159 aa).

S-adenosyl-L-methionine-binding positions include L76, G108, and 127–132 (FGLLTF).

It belongs to the RNA methyltransferase RlmH family. As to quaternary structure, homodimer.

The protein resides in the cytoplasm. The catalysed reaction is pseudouridine(1915) in 23S rRNA + S-adenosyl-L-methionine = N(3)-methylpseudouridine(1915) in 23S rRNA + S-adenosyl-L-homocysteine + H(+). In terms of biological role, specifically methylates the pseudouridine at position 1915 (m3Psi1915) in 23S rRNA. The chain is Ribosomal RNA large subunit methyltransferase H from Streptococcus thermophilus (strain CNRZ 1066).